The primary structure comprises 354 residues: Uroporphyrinogen decarboxylase (354 aa).

Residues 27–31, Asp-77, Tyr-154, Thr-209, and His-327 contribute to the substrate site; that span reads RQAGR.

This sequence belongs to the uroporphyrinogen decarboxylase family. Homodimer.

Its subcellular location is the cytoplasm. It carries out the reaction uroporphyrinogen III + 4 H(+) = coproporphyrinogen III + 4 CO2. It functions in the pathway porphyrin-containing compound metabolism; protoporphyrin-IX biosynthesis; coproporphyrinogen-III from 5-aminolevulinate: step 4/4. In terms of biological role, catalyzes the decarboxylation of four acetate groups of uroporphyrinogen-III to yield coproporphyrinogen-III. This Salmonella agona (strain SL483) protein is Uroporphyrinogen decarboxylase.